Consider the following 293-residue polypeptide: Ethanolamine ammonia-lyase small subunit (293 aa).

Adenosylcob(III)alamin is bound by residues valine 207 and glutamate 228.

It belongs to the EutC family. The basic unit is a heterodimer which dimerizes to form tetramers. The heterotetramers trimerize; 6 large subunits form a core ring with 6 small subunits projecting outwards. It depends on adenosylcob(III)alamin as a cofactor.

Its subcellular location is the bacterial microcompartment. It carries out the reaction ethanolamine = acetaldehyde + NH4(+). Its pathway is amine and polyamine degradation; ethanolamine degradation. Its function is as follows. Catalyzes the deamination of various vicinal amino-alcohols to oxo compounds. Allows this organism to utilize ethanolamine as the sole source of nitrogen and carbon in the presence of external vitamin B12. The sequence is that of Ethanolamine ammonia-lyase small subunit from Clostridioides difficile (strain 630) (Peptoclostridium difficile).